Consider the following 100-residue polypeptide: MTTATTLGDAVFSLNMTRGEDALYKSSGAIVAAIVVVVIIIVTLVLILLKMYNRRMRTRRELEPKSPKPPVPPALDPSSNGSQQPATVTFDPANVHVETR.

The Extracellular segment spans residues 1–28 (MTTATTLGDAVFSLNMTRGEDALYKSSG). The helical transmembrane segment at 29–49 (AIVAAIVVVVIIIVTLVLILL) threads the bilayer. The Cytoplasmic segment spans residues 50-100 (KMYNRRMRTRRELEPKSPKPPVPPALDPSSNGSQQPATVTFDPANVHVETR). The interval 58-100 (TRRELEPKSPKPPVPPALDPSSNGSQQPATVTFDPANVHVETR) is disordered.

Post-translationally, glycosylated. As to expression, found in the peripheral nervous system (PNS) Schwann cells (at protein level). Expressed in the PNS, primarily limited to Schwann cells.

The protein localises to the cell membrane. Its function is as follows. Plays a role in myelin formation. The sequence is that of Noncompact myelin-associated protein (Ncmap) from Mus musculus (Mouse).